The sequence spans 301 residues: MSNLNKRPDWIKVKAPNSAEYYNTKDLIKNLRLNTVCEEAACPNIGECWSKKHATVMILGSVCTRACRFCNVKTGRPDLLDPHEPQRLAEAVQKLNLKHVVITSVDRDDLDDGGATHFAECISEIRKSSPNTTIEILTPDFLRKEGAAEIIANAKPDVFNHNVETVPSLYKTIRPGARYYNSLSLLHNIKKLSPEIFTKSGMMVGLGEEISEVIQVMDDLREAKVDFLTIGQYLQPTKNHAEVAKYVTPEEFKYLERIARTKGFLMVSATPLTRSSYHADEDFQKLKENYQQRHCEEAWPA.

[4Fe-4S] cluster-binding residues include Cys37, Cys42, Cys48, Cys63, Cys67, Cys70, and Ser276. Residues 49 to 265 form the Radical SAM core domain; it reads WSKKHATVMI…ERIARTKGFL (217 aa).

The protein belongs to the radical SAM superfamily. Lipoyl synthase family. [4Fe-4S] cluster is required as a cofactor.

Its subcellular location is the cytoplasm. It catalyses the reaction [[Fe-S] cluster scaffold protein carrying a second [4Fe-4S](2+) cluster] + N(6)-octanoyl-L-lysyl-[protein] + 2 oxidized [2Fe-2S]-[ferredoxin] + 2 S-adenosyl-L-methionine + 4 H(+) = [[Fe-S] cluster scaffold protein] + N(6)-[(R)-dihydrolipoyl]-L-lysyl-[protein] + 4 Fe(3+) + 2 hydrogen sulfide + 2 5'-deoxyadenosine + 2 L-methionine + 2 reduced [2Fe-2S]-[ferredoxin]. The protein operates within protein modification; protein lipoylation via endogenous pathway; protein N(6)-(lipoyl)lysine from octanoyl-[acyl-carrier-protein]: step 2/2. Functionally, catalyzes the radical-mediated insertion of two sulfur atoms into the C-6 and C-8 positions of the octanoyl moiety bound to the lipoyl domains of lipoate-dependent enzymes, thereby converting the octanoylated domains into lipoylated derivatives. This is Lipoyl synthase from Rickettsia felis (strain ATCC VR-1525 / URRWXCal2) (Rickettsia azadi).